The chain runs to 427 residues: Serine hydroxymethyltransferase (427 aa).

(6S)-5,6,7,8-tetrahydrofolate is bound by residues leucine 124 and 128–130 (GHL). Position 233 is an N6-(pyridoxal phosphate)lysine (lysine 233).

It belongs to the SHMT family. As to quaternary structure, homodimer. It depends on pyridoxal 5'-phosphate as a cofactor.

The protein localises to the cytoplasm. It carries out the reaction (6R)-5,10-methylene-5,6,7,8-tetrahydrofolate + glycine + H2O = (6S)-5,6,7,8-tetrahydrofolate + L-serine. It participates in one-carbon metabolism; tetrahydrofolate interconversion. The protein operates within amino-acid biosynthesis; glycine biosynthesis; glycine from L-serine: step 1/1. Its function is as follows. Catalyzes the reversible interconversion of serine and glycine with tetrahydrofolate (THF) serving as the one-carbon carrier. This reaction serves as the major source of one-carbon groups required for the biosynthesis of purines, thymidylate, methionine, and other important biomolecules. Also exhibits THF-independent aldolase activity toward beta-hydroxyamino acids, producing glycine and aldehydes, via a retro-aldol mechanism. The chain is Serine hydroxymethyltransferase from Acidothermus cellulolyticus (strain ATCC 43068 / DSM 8971 / 11B).